The sequence spans 774 residues: RNA exonuclease 5 (774 aa).

Positions 1-19 are enriched in basic and acidic residues; the sequence is MEPEREGTERHPRKVRESR. The disordered stretch occupies residues 1-22; the sequence is MEPEREGTERHPRKVRESRQAP. Residues 228-376 enclose the Exonuclease domain; it reads LFGLDCEMCL…EDARTILELA (149 aa). 2 RRM domains span residues 505–579 and 600–679; these read STVY…RPVT and GSIY…RHLH.

The protein is RNA exonuclease 5 of Homo sapiens (Human).